Here is a 430-residue protein sequence, read N- to C-terminus: Multisubstrate adapter protein soc-1 (430 aa).

The 127-residue stretch at 7 to 133 (NIILEGSLKR…WVNEICKLCK (127 aa)) folds into the PH domain. The segment covering 192–222 (SHNSLPSNPNYNNLPDPLESSRSETSSMYSS) has biased composition (low complexity). Disordered regions lie at residues 192–246 (SHNS…TRHT), 275–303 (EDAE…SEGF), and 315–377 (RRAP…RNLD). Residues 341–369 (RNLSRNGVNENGNYSATFSSRTSNYQQSE) show a composition bias toward polar residues.

Interacts (via C-terminus) with sem-5 (probably via SH3 domain 2). Interacts with nicotinic acetylcholine receptor. In terms of processing, may be phosphorylated.

Adapter protein which modulates signaling mediated by several receptor tyrosine kinases. Plays a role in fluid homeostasis, probably downstream of receptor egl-15 and upstream of let-60/Ras. Involved in nicotinic acetylcholine receptor (nAChR)-mediated sensitivity to nicotine and levamisole and gamma-aminobutyric acid (GABA)receptor-mediated sensitivity to muscimol. Regulates synaptic levels of nAchR receptor subunit lev-1 and unc-38, and GABA receptor subunit unc-49 in the nerve cord, probably downstream of egl-15. Regulates motility. During the formation of neuromuscular junctions at the larval stage, down-regulates membrane protrusion from body wall muscles, probably downstream of egl-15. Promotes vulva induction and down-regulates fertility, probably downstream of receptor let-23. Down-regulates daf-2-mediated repression of dauer formation and positively regulates daf-2-mediated aging. May be involved in the recruitment of phosphatase ptp-2 to egl-15. This Caenorhabditis elegans protein is Multisubstrate adapter protein soc-1.